A 140-amino-acid polypeptide reads, in one-letter code: FAD synthase (140 aa).

ATP-binding positions include 9–10 (TF), 14–17 (HPGH), and Asp-92.

It belongs to the archaeal FAD synthase family. As to quaternary structure, homodimer. A divalent metal cation serves as cofactor.

It carries out the reaction FMN + ATP + H(+) = FAD + diphosphate. It functions in the pathway cofactor biosynthesis; FAD biosynthesis; FAD from FMN: step 1/1. Functionally, catalyzes the transfer of the AMP portion of ATP to flavin mononucleotide (FMN) to produce flavin adenine dinucleotide (FAD) coenzyme. This is FAD synthase from Natronomonas pharaonis (strain ATCC 35678 / DSM 2160 / CIP 103997 / JCM 8858 / NBRC 14720 / NCIMB 2260 / Gabara) (Halobacterium pharaonis).